Here is an 895-residue protein sequence, read N- to C-terminus: MRMFETRAREWILLVKLVLFTSIWQLASALGSMSSIAISYGEGGSVFCGLKSDGSHLVVCYGSNSAILYGTPGHLQFIGLTGGDGFMCGLLMLSHQPYCWGNSAFIQMGVPQPMTKGAEYLEVSAGDYHLCGLRKPIVGRRKNSNIISSSLVDCWGYNMTRNFVFDKQLHSLSAGSEFNCALSSKDKSVFCWGDENSSQVISLIPKEKKFQKIAAGGYHVCGILDGLESRVLCWGKSLEFEEEVTGTSTEEKILDLPPKEPLLAVVGGKFYACGIKRYDHSAVCWGFFVNRSTPAPTGIGFYDLAAGNYFTCGVLTGTSMSPVCWGLGFPASIPLAVSPGLCIDTPCPPGTHELSNQENSPCKFTGSHICLPCSTSCPPGMYQKSVCTERSDQVCVYNCSSCSSHDCSSNCSSSATSGGKEKGKFWSLQLPIATAEIGFALFLVAVVSITAALYIRYRLRNCRCSENDTRSSKDSAFTKDNGKIRPDLDELQKRRRARVFTYEELEKAADGFKEESIVGKGSFSCVYKGVLRDGTTVAVKRAIMSSDKQKNSNEFRTELDLLSRLNHAHLLSLLGYCEECGERLLVYEFMAHGSLHNHLHGKNKALKEQLDWVKRVTIAVQAARGIEYLHGYACPPVIHRDIKSSNILIDEEHNARVADFGLSLLGPVDSGSPLAELPAGTLGYLDPEYYRLHYLTTKSDVYSFGVLLLEILSGRKAIDMHYEEGNIVEWAVPLIKAGDINALLDPVLKHPSEIEALKRIVSVACKCVRMRGKDRPSMDKVTTALERALAQLMGNPSSEQPILPTEVVLGSSRMHKKSWRIGSKRSGSENTEFRGGSWITFPSVTSSQRRKSSASEGDVAEEEDEGRKQQEALRSLEEEIGPASPGQSLFLHHNF.

Residues 1–29 form the signal peptide; it reads MRMFETRAREWILLVKLVLFTSIWQLASA. Residues 30–434 are Extracellular-facing; it reads LGSMSSIAIS…FWSLQLPIAT (405 aa). Repeat copies occupy residues 38 to 73, 77 to 112, 130 to 167, 169 to 202, 210 to 245, 262 to 296, and 301 to 339. Residues 38–339 form a 7 X 36 AA repeats region; that stretch reads ISYGEGGSVF…PASIPLAVSP (302 aa). 2 N-linked (GlcNAc...) asparagine glycosylation sites follow: asparagine 158 and asparagine 196. An N-linked (GlcNAc...) asparagine glycan is attached at asparagine 290. Residues 346–395 form a TNFR-Cys repeat; that stretch reads PCPPGTHELSNQENSPCKFTGSHICLPCSTSCPPGMYQKSVCTERSDQVC. Disulfide bonds link cysteine 347-cysteine 370, cysteine 373-cysteine 387, and cysteine 377-cysteine 395. N-linked (GlcNAc...) asparagine glycosylation is found at asparagine 398 and asparagine 410. A helical transmembrane segment spans residues 435–455; the sequence is AEIGFALFLVAVVSITAALYI. Topologically, residues 456 to 895 are cytoplasmic; it reads RYRLRNCRCS…GQSLFLHHNF (440 aa). Serine 475 carries the phosphoserine modification. The Protein kinase domain maps to 512-789; sequence FKEESIVGKG…KVTTALERAL (278 aa). Residues 518–526 and lysine 540 contribute to the ATP site; that span reads VGKGSFSCV. Aspartate 641 acts as the Proton acceptor in catalysis. The tract at residues 818-895 is disordered; it reads SWRIGSKRSG…GQSLFLHHNF (78 aa). A compositionally biased stretch (basic and acidic residues) spans 865-877; the sequence is EGRKQQEALRSLE.

The protein belongs to the protein kinase superfamily. Ser/Thr protein kinase family. Homodimer. Interacts with PP2A3. In terms of processing, autophosphorylated and phosphorylated by ALE2. Expressed in seedlings, floral buds, siliques, leaves, shoot apical meristems (SAM), and, to a lower extent, in roots.

It is found in the cell membrane. It localises to the endosome. The protein localises to the multivesicular body membrane. The catalysed reaction is L-seryl-[protein] + ATP = O-phospho-L-seryl-[protein] + ADP + H(+). It carries out the reaction L-threonyl-[protein] + ATP = O-phospho-L-threonyl-[protein] + ADP + H(+). In terms of biological role, controls formative cell division in meristems, including root tips and lateral root initiation zones of the pericycle, in response to CLE40 signal. Acts with CLE40p peptide as a ligand-receptor pair in a signal transduction pathway, coordinating movement of the root tip and organization of cell divisions in the root meristem. Required during embryogenesis and development, probably for the differentiation of protoderm and epidermal cells. Involved in the regulation of cellular organization during the development of sepal margins and ovule integument outgrowth and promotes giant cell formation. Can phosphorylate ALE2. This is Serine/threonine-protein kinase-like protein ACR4 from Arabidopsis thaliana (Mouse-ear cress).